The chain runs to 464 residues: Dihydrolipoyl dehydrogenase (464 aa).

FAD-binding positions include 36-44 (EGAALGGTC), K53, and A119. Cysteines 44 and 49 form a disulfide. NAD(+) is bound by residues 184–188 (GGGYI), E207, and 269–272 (AVGR). Residues D311 and A319 each coordinate FAD. The active-site Proton acceptor is H443.

It belongs to the class-I pyridine nucleotide-disulfide oxidoreductase family. Homodimer. It depends on FAD as a cofactor.

The protein resides in the cytoplasm. It carries out the reaction N(6)-[(R)-dihydrolipoyl]-L-lysyl-[protein] + NAD(+) = N(6)-[(R)-lipoyl]-L-lysyl-[protein] + NADH + H(+). Its function is as follows. The branched-chain alpha-keto dehydrogenase complex catalyzes the overall conversion of alpha-keto acids to acyl-CoA and CO(2). It contains multiple copies of 3 enzymatic components: branched-chain alpha-keto acid decarboxylase (E1), lipoamide acyltransferase (E2) and lipoamide dehydrogenase (E3). This Pseudomonas aeruginosa (strain ATCC 15692 / DSM 22644 / CIP 104116 / JCM 14847 / LMG 12228 / 1C / PRS 101 / PAO1) protein is Dihydrolipoyl dehydrogenase.